The primary structure comprises 120 residues: Phosphoribosyl-AMP cyclohydrolase (120 aa).

Asp-74 is a binding site for Mg(2+). Zn(2+) is bound at residue Cys-75. Mg(2+) contacts are provided by Asp-76 and Asp-78. Residues Cys-91 and Cys-98 each coordinate Zn(2+).

Belongs to the PRA-CH family. Homodimer. Requires Mg(2+) as cofactor. It depends on Zn(2+) as a cofactor.

Its subcellular location is the cytoplasm. The enzyme catalyses 1-(5-phospho-beta-D-ribosyl)-5'-AMP + H2O = 1-(5-phospho-beta-D-ribosyl)-5-[(5-phospho-beta-D-ribosylamino)methylideneamino]imidazole-4-carboxamide. It functions in the pathway amino-acid biosynthesis; L-histidine biosynthesis; L-histidine from 5-phospho-alpha-D-ribose 1-diphosphate: step 3/9. Catalyzes the hydrolysis of the adenine ring of phosphoribosyl-AMP. In Natronomonas pharaonis (strain ATCC 35678 / DSM 2160 / CIP 103997 / JCM 8858 / NBRC 14720 / NCIMB 2260 / Gabara) (Halobacterium pharaonis), this protein is Phosphoribosyl-AMP cyclohydrolase.